A 416-amino-acid chain; its full sequence is Serine hydroxymethyltransferase (416 aa).

Residues leucine 121 and 125 to 127 (GHL) each bind (6S)-5,6,7,8-tetrahydrofolate. At lysine 230 the chain carries N6-(pyridoxal phosphate)lysine.

This sequence belongs to the SHMT family. As to quaternary structure, homodimer. It depends on pyridoxal 5'-phosphate as a cofactor.

Its subcellular location is the cytoplasm. The catalysed reaction is (6R)-5,10-methylene-5,6,7,8-tetrahydrofolate + glycine + H2O = (6S)-5,6,7,8-tetrahydrofolate + L-serine. It functions in the pathway one-carbon metabolism; tetrahydrofolate interconversion. Its pathway is amino-acid biosynthesis; glycine biosynthesis; glycine from L-serine: step 1/1. Its function is as follows. Catalyzes the reversible interconversion of serine and glycine with tetrahydrofolate (THF) serving as the one-carbon carrier. This reaction serves as the major source of one-carbon groups required for the biosynthesis of purines, thymidylate, methionine, and other important biomolecules. Also exhibits THF-independent aldolase activity toward beta-hydroxyamino acids, producing glycine and aldehydes, via a retro-aldol mechanism. This Nitrosomonas europaea (strain ATCC 19718 / CIP 103999 / KCTC 2705 / NBRC 14298) protein is Serine hydroxymethyltransferase.